Reading from the N-terminus, the 131-residue chain is Global transcriptional regulator Spx (131 aa).

Positions 10 to 13 match the CXXC motif; the sequence is CTSC. A disulfide bond links cysteine 10 and cysteine 13.

This sequence belongs to the ArsC family. Spx subfamily. As to quaternary structure, interacts with the C-terminal domain of the alpha subunit of the RNAP. A single Spx monomer interacts with RNAP to form the transcription activation complex. Interacts with the adapter protein SpxH/YjbH.

It is found in the cytoplasm. Under non-stress conditions, Spx is degraded by ClpXP and, to a lesser extent, by ClpCP. Efficient dedradation by ClpXP requires the adapter protein SpxH/YjbH. Binding to SpxH/YjbH reduces the overall conformational flexibility of Spx and stabilizes the C-terminal ClpX recognition region of Spx. In addition, activity is modulated by the formation of a disulfide bound within the N-terminal Cys-X-X-Cys (CXXC) motif, which is required for the transcriptional activation of trxA and trxB, or for the activation of msrAB operon expression following paraquat oxidative stress. However, it seems that formation of the disulfide bound is not essential for induction of all Spx-controlled genes, as for example the case of BSH biosynthesis genes. Similarly, induction of the Spx regulon during cell wall stress is not accompanied by oxidation of the disulfide switch, but requires Spx stabilization by the anti-adapter protein SpxO/YirB. Functionally, global transcriptional regulator that plays a key role in stress response and exerts either positive or negative regulation of genes. Acts by interacting with the C-terminal domain of the alpha subunit of the RNA polymerase (RNAP). This interaction can enhance binding of RNAP to the promoter region of target genes and stimulate their transcription, or block interaction of RNAP with activator proteins and repress transcription. Exhibits no DNA-binding activity. In terms of biological role, induces the expression of a large number of genes in response to a variety of stress conditions, such as disulfide, heat and cell wall stress, while concurrently repressing transcription of genes involved in various developmental and growth-related pathways during periods of extreme stress. Functions in the oxidative stress response via induction of the transcription of thioredoxin (trxA) and thioredoxin reductase (trxB) during thiol-specific oxidative (disulfide) stress. Mediates response to oxidative stress caused by paraquat (PQ) via induction of the methionine sulfoxide reductase genes, msrA and msrB. Also acts as a transcriptional activator of the bacillithiol (BSH) biosynthesis genes in response to oxidizing conditions and thio-reactive compounds. Involved in heat stress response and thermotolerance development, which results in diminished cellular protein aggregates. Plays an important adaptive role in the cell wall stress response. Participates in sulfate-dependent control of organosulfur metabolism. Negatively controls, via CymR, the expression of the organosulfur utilization operons ytmI, yxeI and ssu, and directly activates yrrT operon expression during growth in medium containing methionine as sole sulfur source. Negatively affects competence and sporulation. Inhibits biofilm formation in response to disulfide stress by repressing biofilm matrix genes. This chain is Global transcriptional regulator Spx, found in Bacillus subtilis (strain 168).